We begin with the raw amino-acid sequence, 139 residues long: Tol-Pal system protein TolR (139 aa).

The helical transmembrane segment at 15–35 (IVPFLDVLLVLVLIFMATAPI) threads the bilayer.

The protein belongs to the ExbD/TolR family. The Tol-Pal system is composed of five core proteins: the inner membrane proteins TolA, TolQ and TolR, the periplasmic protein TolB and the outer membrane protein Pal. They form a network linking the inner and outer membranes and the peptidoglycan layer.

Its subcellular location is the cell inner membrane. Part of the Tol-Pal system, which plays a role in outer membrane invagination during cell division and is important for maintaining outer membrane integrity. The chain is Tol-Pal system protein TolR from Haemophilus influenzae (strain ATCC 51907 / DSM 11121 / KW20 / Rd).